Consider the following 592-residue polypeptide: Elongation factor 1 alpha-like protein (592 aa).

2 disordered regions span residues 1-35 (MSRHRDVKNLDLDDYELDEEPGEEELTEEQEEEFR) and 78-159 (SSKA…KQNP). Acidic residues predominate over residues 12–32 (LDDYELDEEPGEEELTEEQEE). Basic and acidic residues predominate over residues 82 to 111 (GAKEKQNTDSQKEKKQNKSKEALADAKDPL). The segment covering 113–124 (ESSNGIKNLSLN) has biased composition (polar residues). The segment covering 137-151 (VKMKNSSESDNQPEK) has biased composition (basic and acidic residues). The tr-type G domain occupies 175–401 (KPVVHLVVTG…DQLVPPEKPY (227 aa)). The interval 184-191 (GHVDSGKS) is G1. 184-191 (GHVDSGKS) serves as a coordination point for GTP. The tract at residues 240–244 (GVTMD) is G2. Residues 261-264 (DAPG) are G3. Residues 323-326 (NKLD) and 352-355 (FKTS) contribute to the GTP site. The G4 stretch occupies residues 323–326 (NKLD). A G5 region spans residues 363 to 365 (SAI).

The protein belongs to the TRAFAC class translation factor GTPase superfamily. Classic translation factor GTPase family. In terms of assembly, component of the Dom34-Hbs1 complex, also named Pelota-HBS1L complex, composed of dom34 and hbs1.

It is found in the cytoplasm. It carries out the reaction GTP + H2O = GDP + phosphate + H(+). Its function is as follows. GTPase component of the Dom34-Hbs1 complex, a complex that recognizes stalled ribosomes and triggers the No-Go Decay (NGD) pathway. The Dom34-Hbs1 complex recognizes ribosomes stalled at the 3' end of an mRNA and engages stalled ribosomes by destabilizing mRNA in the mRNA channel. Following ribosome-binding, the Pelota-HBS1L complex promotes the disassembly of stalled ribosomes, followed by degradation of damaged mRNAs as part of the NGD pathway. This chain is Elongation factor 1 alpha-like protein, found in Schizosaccharomyces pombe (strain 972 / ATCC 24843) (Fission yeast).